Reading from the N-terminus, the 326-residue chain is Tagatose 1,6-diphosphate aldolase (326 aa).

This sequence belongs to the aldolase LacD family.

The catalysed reaction is D-tagatofuranose 1,6-bisphosphate = D-glyceraldehyde 3-phosphate + dihydroxyacetone phosphate. The protein operates within carbohydrate metabolism; D-tagatose 6-phosphate degradation; D-glyceraldehyde 3-phosphate and glycerone phosphate from D-tagatose 6-phosphate: step 2/2. This chain is Tagatose 1,6-diphosphate aldolase, found in Streptococcus pneumoniae (strain ATCC BAA-255 / R6).